The chain runs to 389 residues: UDP-N-acetylglucosamine--N-acetylmuramyl-(pentapeptide) pyrophosphoryl-undecaprenol N-acetylglucosamine transferase (389 aa).

Residues 39-41, Asn-157, Arg-193, Ser-221, Ile-275, 294-299, and Gln-320 contribute to the UDP-N-acetyl-alpha-D-glucosamine site; these read TGG and ALTVSE.

The protein belongs to the glycosyltransferase 28 family. MurG subfamily.

It is found in the cell inner membrane. The enzyme catalyses di-trans,octa-cis-undecaprenyl diphospho-N-acetyl-alpha-D-muramoyl-L-alanyl-D-glutamyl-meso-2,6-diaminopimeloyl-D-alanyl-D-alanine + UDP-N-acetyl-alpha-D-glucosamine = di-trans,octa-cis-undecaprenyl diphospho-[N-acetyl-alpha-D-glucosaminyl-(1-&gt;4)]-N-acetyl-alpha-D-muramoyl-L-alanyl-D-glutamyl-meso-2,6-diaminopimeloyl-D-alanyl-D-alanine + UDP + H(+). The protein operates within cell wall biogenesis; peptidoglycan biosynthesis. In terms of biological role, cell wall formation. Catalyzes the transfer of a GlcNAc subunit on undecaprenyl-pyrophosphoryl-MurNAc-pentapeptide (lipid intermediate I) to form undecaprenyl-pyrophosphoryl-MurNAc-(pentapeptide)GlcNAc (lipid intermediate II). This is UDP-N-acetylglucosamine--N-acetylmuramyl-(pentapeptide) pyrophosphoryl-undecaprenol N-acetylglucosamine transferase from Saccharophagus degradans (strain 2-40 / ATCC 43961 / DSM 17024).